Consider the following 359-residue polypeptide: Cytoplasmic tRNA 2-thiolation protein 2 (359 aa).

It belongs to the CTU2/NCS2 family.

It is found in the cytoplasm. It functions in the pathway tRNA modification; 5-methoxycarbonylmethyl-2-thiouridine-tRNA biosynthesis. Plays a central role in 2-thiolation of mcm(5)S(2)U at tRNA wobble positions of tRNA(Lys), tRNA(Glu) and tRNA(Gln). May act by forming a heterodimer with NCS6 that ligates sulfur from thiocarboxylated URM1 onto the uridine of tRNAs at wobble position. Prior mcm(5) tRNA modification by the elongator complex is required for 2-thiolation. May also be involved in protein urmylation. The chain is Cytoplasmic tRNA 2-thiolation protein 2 from Ajellomyces capsulatus (strain NAm1 / WU24) (Darling's disease fungus).